We begin with the raw amino-acid sequence, 433 residues long: Serine hydroxymethyltransferase (433 aa).

Residues leucine 132 and glycine 136–leucine 138 contribute to the (6S)-5,6,7,8-tetrahydrofolate site. Residue lysine 241 is modified to N6-(pyridoxal phosphate)lysine.

This sequence belongs to the SHMT family. In terms of assembly, homodimer. It depends on pyridoxal 5'-phosphate as a cofactor.

Its subcellular location is the cytoplasm. The catalysed reaction is (6R)-5,10-methylene-5,6,7,8-tetrahydrofolate + glycine + H2O = (6S)-5,6,7,8-tetrahydrofolate + L-serine. Its pathway is one-carbon metabolism; tetrahydrofolate interconversion. The protein operates within amino-acid biosynthesis; glycine biosynthesis; glycine from L-serine: step 1/1. In terms of biological role, catalyzes the reversible interconversion of serine and glycine with tetrahydrofolate (THF) serving as the one-carbon carrier. This reaction serves as the major source of one-carbon groups required for the biosynthesis of purines, thymidylate, methionine, and other important biomolecules. Also exhibits THF-independent aldolase activity toward beta-hydroxyamino acids, producing glycine and aldehydes, via a retro-aldol mechanism. This chain is Serine hydroxymethyltransferase, found in Rhodopseudomonas palustris (strain BisA53).